The sequence spans 540 residues: Chaperonin GroEL 3 (540 aa).

ATP-binding positions include 30–33 (TLGP), K51, 87–91 (DGTTT), G415, 480–482 (NAA), and D496.

The protein belongs to the chaperonin (HSP60) family. In terms of assembly, forms a cylinder of 14 subunits composed of two heptameric rings stacked back-to-back. Interacts with the co-chaperonin GroES.

It is found in the cytoplasm. The catalysed reaction is ATP + H2O + a folded polypeptide = ADP + phosphate + an unfolded polypeptide.. Its function is as follows. Together with its co-chaperonin GroES, plays an essential role in assisting protein folding. The GroEL-GroES system forms a nano-cage that allows encapsulation of the non-native substrate proteins and provides a physical environment optimized to promote and accelerate protein folding. This chain is Chaperonin GroEL 3, found in Bradyrhizobium sp. (strain BTAi1 / ATCC BAA-1182).